The sequence spans 550 residues: Chaperonin GroEL (550 aa).

Residues 30–33, lysine 51, 87–91, glycine 415, and aspartate 497 each bind ATP; these read TLGP and DGTTT.

It belongs to the chaperonin (HSP60) family. In terms of assembly, forms a cylinder of 14 subunits composed of two heptameric rings stacked back-to-back. Interacts with the co-chaperonin GroES.

Its subcellular location is the cytoplasm. The catalysed reaction is ATP + H2O + a folded polypeptide = ADP + phosphate + an unfolded polypeptide.. Its function is as follows. Together with its co-chaperonin GroES, plays an essential role in assisting protein folding. The GroEL-GroES system forms a nano-cage that allows encapsulation of the non-native substrate proteins and provides a physical environment optimized to promote and accelerate protein folding. In Yersinia enterocolitica, this protein is Chaperonin GroEL.